A 141-amino-acid polypeptide reads, in one-letter code: Succinate dehydrogenase [ubiquinone] cytochrome b small subunit 2 (141 aa).

The N-terminal 24 residues, methionine 1–threonine 24, are a transit peptide targeting the mitochondrion. Residues serine 25–phenylalanine 44 lie on the Mitochondrial matrix side of the membrane. The helical transmembrane segment at lysine 45–phenylalanine 63 threads the bilayer. Residues isoleucine 64 to alanine 68 are Mitochondrial intermembrane-facing. A helical transmembrane segment spans residues methionine 69–valine 89. Histidine 80 is a heme b binding site. Residues serine 90–arginine 104 are Mitochondrial matrix-facing. Tyrosine 92 lines the a ubiquinone pocket. The helical transmembrane segment at valine 105 to asparagine 126 threads the bilayer. Topologically, residues serine 127–leucine 141 are mitochondrial intermembrane.

Belongs to the CybS family. Component of the mitochondrial electron transport chain complex II composed of four subunits: a flavoprotein (Fp), an iron-sulfur protein (Ip), and a large cytochrome b (CybL) subunit and a small cytochrome b (CybS) subunit. There are 2 developmental stage-specific forms of complex II which have the Ip and CybL subunits in common. Complex II from the free-living larvae (aerobic environment) acts as a succinate dehydrogenase and is composed of the common subunit Ip and CybL and the stage specific subunits FpL and CybSL. Complex II from parasitic larvae and adults (anaerobic environment) acts as a fumarate reductase and is composed of the common subunit Ip and CybL and the stage specific subunits FpA and CybSA. Heme b is required as a cofactor.

It localises to the mitochondrion inner membrane. It participates in carbohydrate metabolism; tricarboxylic acid cycle; fumarate from succinate (eukaryal route): step 1/1. Its function is as follows. Membrane-bound small subunit (CybS) of the mitochondrial electron transport chain complex II, which together with the membrane-bound large subunit (CybL), anchor the catalytic subunits to the inner mitochondria membrane. During the free-living egg-larvae stages, which occur in an aerobic environment, complex II acts as a succinate dehydrogenase by transferring electrons from succinate to ubiquinone. The polypeptide is Succinate dehydrogenase [ubiquinone] cytochrome b small subunit 2 (Ascaris suum (Pig roundworm)).